A 67-amino-acid polypeptide reads, in one-letter code: DNA-directed RNA polymerases I, II, and III subunit RPABC5 (67 aa).

Residues Cys7, Cys10, Cys44, and Cys45 each coordinate Zn(2+).

Belongs to the archaeal Rpo10/eukaryotic RPB10 RNA polymerase subunit family. In terms of assembly, component of the RNA polymerase I (Pol I), RNA polymerase II (Pol II) and RNA polymerase III (Pol III) complexes consisting of at least 13, 12 and 17 subunits, respectively.

It localises to the nucleus. Functionally, DNA-dependent RNA polymerase catalyzes the transcription of DNA into RNA using the four ribonucleoside triphosphates as substrates. Common component of RNA polymerases I, II and III which synthesize ribosomal RNA precursors, mRNA precursors and many functional non-coding RNAs, and a small RNAs, such as 5S rRNA and tRNAs, respectively. Pol II is the central component of the basal RNA polymerase II transcription machinery. Pols are composed of mobile elements that move relative to each other. In Pol II, RBP10 is part of the core element with the central large cleft. The sequence is that of DNA-directed RNA polymerases I, II, and III subunit RPABC5 from Caenorhabditis briggsae.